The following is a 243-amino-acid chain: Terpene cyclase paxB (243 aa).

7 helical membrane passes run 23-43, 49-69, 78-98, 112-132, 134-154, 172-194, and 205-225; these read FVVG…YISF, GMSI…CLVF, GVFW…ITFS, ISLI…ALAL, IGPA…LSVG, LWAS…WMYW, and LVLW…ICFW.

Belongs to the paxB family.

It localises to the membrane. It functions in the pathway secondary metabolite biosynthesis. In terms of biological role, terpene cyclase; part of the ATM2 gene cluster that mediates the biosynthesis of paxilline, a mycotoxin that acts as an inhibitor of mammalian maxi-K channels. PaxG, the geranylgeranyl diphosphate (GGPP) synthase is proposed to catalyze the first step in paxilline biosynthesis. Condensation of indole-3-glycerol phosphate with GGPP by paxC then forms 3-geranylgeranylindole (3-GGI), followed by epoxidation and cyclization of this intermediate (by paxM and paxB) to form paspaline. Paspaline is subsequently converted to 13-desoxypaxilline by paxP, the latter being then converted to paxilline by paxQ. Finally paxilline can be mono- and di-prenylated by paxD. This is Terpene cyclase paxB from Penicillium paxilli.